A 441-amino-acid chain; its full sequence is Ribulose bisphosphate carboxylase large chain (441 aa).

Substrate contacts are provided by Asn89 and Thr139. Lys141 functions as the Proton acceptor in the catalytic mechanism. Lys143 lines the substrate pocket. Residues Lys167, Asp169, and Glu170 each coordinate Mg(2+). An N6-carboxylysine modification is found at Lys167. His260 serves as the catalytic Proton acceptor. Residues Arg261, His293, and Ser345 each contribute to the substrate site.

This sequence belongs to the RuBisCO large chain family. Type I subfamily. As to quaternary structure, heterohexadecamer of 8 large chains and 8 small chains; disulfide-linked. The disulfide link is formed within the large subunit homodimers. Mg(2+) serves as cofactor. The disulfide bond which can form in the large chain dimeric partners within the hexadecamer appears to be associated with oxidative stress and protein turnover.

Its subcellular location is the plastid. The protein resides in the chloroplast. The enzyme catalyses 2 (2R)-3-phosphoglycerate + 2 H(+) = D-ribulose 1,5-bisphosphate + CO2 + H2O. It carries out the reaction D-ribulose 1,5-bisphosphate + O2 = 2-phosphoglycolate + (2R)-3-phosphoglycerate + 2 H(+). RuBisCO catalyzes two reactions: the carboxylation of D-ribulose 1,5-bisphosphate, the primary event in carbon dioxide fixation, as well as the oxidative fragmentation of the pentose substrate in the photorespiration process. Both reactions occur simultaneously and in competition at the same active site. This is Ribulose bisphosphate carboxylase large chain from Fouquieria splendens (Ocotillo).